Consider the following 369-residue polypeptide: tRNA/tmRNA (uracil-C(5))-methyltransferase (369 aa).

5 residues coordinate S-adenosyl-L-methionine: glutamine 192, tyrosine 221, asparagine 226, glutamate 242, and aspartate 302. The active-site Nucleophile is cysteine 327. The Proton acceptor role is filled by glutamate 361.

Belongs to the class I-like SAM-binding methyltransferase superfamily. RNA M5U methyltransferase family. TrmA subfamily.

It catalyses the reaction uridine(54) in tRNA + S-adenosyl-L-methionine = 5-methyluridine(54) in tRNA + S-adenosyl-L-homocysteine + H(+). It carries out the reaction uridine(341) in tmRNA + S-adenosyl-L-methionine = 5-methyluridine(341) in tmRNA + S-adenosyl-L-homocysteine + H(+). In terms of biological role, dual-specificity methyltransferase that catalyzes the formation of 5-methyluridine at position 54 (m5U54) in all tRNAs, and that of position 341 (m5U341) in tmRNA (transfer-mRNA). This chain is tRNA/tmRNA (uracil-C(5))-methyltransferase, found in Haemophilus ducreyi (strain 35000HP / ATCC 700724).